Consider the following 317-residue polypeptide: MSVRLGIVMDPIASISYKKDSSLAMLLAAQARGWSLFYMEQQDLYQGEGKARARMRPLKVFADPARWFELGEEQDSPLAELDVILMRKDPPFDMEFVYSTYLLEQAENDGVLVVNRPQSLRDCNEKMFATLFPQCTTPTLVSRRPDIIREFTAKHADVILKPLDGMGGTSIFRHRAGDPNLSVILETLTALGTQQIMAQAYLPAIKDGDKRILMIDGEPVDYCLARIPASGETRGNLAAGGRGEARPLTERDRWIAAQVGPTLREKGLLFVGLDVIGDYLTEINVTSPTCIREIDAAYNTDIGGKLMDAIDRKLKAR.

The 187-residue stretch at 125–311 (EKMFATLFPQ…IGGKLMDAID (187 aa)) folds into the ATP-grasp domain. 152–208 (TAKHADVILKPLDGMGGTSIFRHRAGDPNLSVILETLTALGTQQIMAQAYLPAIKDG) is an ATP binding site. Mg(2+)-binding residues include Glu282 and Asn284.

Belongs to the prokaryotic GSH synthase family. Mg(2+) is required as a cofactor. It depends on Mn(2+) as a cofactor.

The enzyme catalyses gamma-L-glutamyl-L-cysteine + glycine + ATP = glutathione + ADP + phosphate + H(+). Its pathway is sulfur metabolism; glutathione biosynthesis; glutathione from L-cysteine and L-glutamate: step 2/2. The chain is Glutathione synthetase from Pseudomonas putida (strain ATCC 47054 / DSM 6125 / CFBP 8728 / NCIMB 11950 / KT2440).